Consider the following 155-residue polypeptide: Glutamyl-tRNA(Gln) amidotransferase subunit C, chloroplastic/mitochondrial (155 aa).

The N-terminal 52 residues, 1 to 52 (MATRALLAVIYASPNRCYISPSRIKIQSLTCSSSSHYYQRQSRKNHRIARSY), are a transit peptide targeting the chloroplast and mitochondrion.

It belongs to the GatC family. Subunit of the heterotrimeric GatCAB amidotransferase (AdT) complex, composed of A, B and C subunits.

The protein resides in the mitochondrion. Its subcellular location is the plastid. It is found in the chloroplast. The enzyme catalyses L-glutamyl-tRNA(Gln) + L-glutamine + ATP + H2O = L-glutaminyl-tRNA(Gln) + L-glutamate + ADP + phosphate + H(+). Allows the formation of correctly charged Gln-tRNA(Gln) through the transamidation of misacylated Glu-tRNA(Gln) in chloroplasts and mitochondria. The reaction takes place in the presence of glutamine and ATP through an activated gamma-phospho-Glu-tRNA(Gln). This Arabidopsis thaliana (Mouse-ear cress) protein is Glutamyl-tRNA(Gln) amidotransferase subunit C, chloroplastic/mitochondrial.